The primary structure comprises 298 residues: Glutamyl-Q tRNA(Asp) synthetase (298 aa).

L-glutamate is bound by residues 9-13 (RFAPS) and glutamate 45. The 'HIGH' region signature appears at 12–22 (PSPSGELHFGS). Zn(2+) contacts are provided by cysteine 101, cysteine 103, tyrosine 115, and cysteine 119. The L-glutamate site is built by tyrosine 172 and arginine 190. Positions 228 to 232 (KLSKQ) match the 'KMSKS' region motif. Lysine 231 serves as a coordination point for ATP.

The protein belongs to the class-I aminoacyl-tRNA synthetase family. GluQ subfamily. The cofactor is Zn(2+).

Its function is as follows. Catalyzes the tRNA-independent activation of glutamate in presence of ATP and the subsequent transfer of glutamate onto a tRNA(Asp). Glutamate is transferred on the 2-amino-5-(4,5-dihydroxy-2-cyclopenten-1-yl) moiety of the queuosine in the wobble position of the QUC anticodon. The sequence is that of Glutamyl-Q tRNA(Asp) synthetase from Cronobacter sakazakii (strain ATCC BAA-894) (Enterobacter sakazakii).